The sequence spans 123 residues: Large ribosomal subunit protein bL12 (123 aa).

This sequence belongs to the bacterial ribosomal protein bL12 family. Homodimer. Part of the ribosomal stalk of the 50S ribosomal subunit. Forms a multimeric L10(L12)X complex, where L10 forms an elongated spine to which 2 to 4 L12 dimers bind in a sequential fashion. Binds GTP-bound translation factors.

Functionally, forms part of the ribosomal stalk which helps the ribosome interact with GTP-bound translation factors. Is thus essential for accurate translation. The polypeptide is Large ribosomal subunit protein bL12 (Rhodospirillum rubrum (strain ATCC 11170 / ATH 1.1.1 / DSM 467 / LMG 4362 / NCIMB 8255 / S1)).